Reading from the N-terminus, the 501-residue chain is Atypical kinase COQ8, mitochondrial (501 aa).

The transit peptide at 1 to 29 (MVTNMVKLRNLRRLYCSSRLLRTIQNGRI) directs the protein to the mitochondrion. A disordered region spans residues 41-69 (YTTKSAKEGEENVERKHEEEKKDTLKSSS). A compositionally biased stretch (basic and acidic residues) spans 45 to 65 (SAKEGEENVERKHEEEKKDTL). The KxGQ motif motif lies at 134 to 137 (KIGQ). Residues 188-501 (KFDKIPMAAA…LFKEIFAYKV (314 aa)) form the Protein kinase domain. The AAAS motif signature appears at 195-198 (AAAS). ATP contacts are provided by residues Ser198, Lys216, and 303 to 306 (MTRM). The Proton acceptor role is filled by Asp346. ATP-binding residues include Asn351 and Asp365.

Belongs to the protein kinase superfamily. ADCK protein kinase family. As to quaternary structure, forms homopolymers. Predominantly associated with a complex of about 500 kDa.

The protein localises to the mitochondrion inner membrane. The protein operates within cofactor biosynthesis; ubiquinone biosynthesis. Atypical kinase involved in the biosynthesis of coenzyme Q, also named ubiquinone, an essential lipid-soluble electron transporter for aerobic cellular respiration. Its substrate specificity is still unclear: may act as a protein kinase that mediates phosphorylation of COQ3, COQ5 and/or COQ7. According to other reports, acts as a small molecule kinase, possibly a lipid kinase that phosphorylates a prenyl lipid in the ubiquinone biosynthesis pathway, as suggested by its ability to bind coenzyme Q lipid intermediates. This is Atypical kinase COQ8, mitochondrial (COQ8) from Saccharomyces cerevisiae (strain ATCC 204508 / S288c) (Baker's yeast).